Here is a 569-residue protein sequence, read N- to C-terminus: Ribonuclease J (569 aa).

The Zn(2+) site is built by H81, H83, D85, H86, H150, and D172. A substrate-binding site is contributed by 373 to 377; that stretch reads HASGH. Residue H399 coordinates Zn(2+).

This sequence belongs to the metallo-beta-lactamase superfamily. RNA-metabolizing metallo-beta-lactamase-like family. Bacterial RNase J subfamily. In terms of assembly, homodimer, may be a subunit of the RNA degradosome. It depends on Zn(2+) as a cofactor.

It localises to the cytoplasm. In terms of biological role, an RNase that has 5'-3' exonuclease and possibly endoonuclease activity. Involved in maturation of rRNA and in some organisms also mRNA maturation and/or decay. In Mycoplasma genitalium (strain ATCC 33530 / DSM 19775 / NCTC 10195 / G37) (Mycoplasmoides genitalium), this protein is Ribonuclease J.